The chain runs to 122 residues: Large ribosomal subunit protein bL12 (122 aa).

The protein belongs to the bacterial ribosomal protein bL12 family. As to quaternary structure, homodimer. Part of the ribosomal stalk of the 50S ribosomal subunit. Forms a multimeric L10(L12)X complex, where L10 forms an elongated spine to which 2 to 4 L12 dimers bind in a sequential fashion. Binds GTP-bound translation factors.

Forms part of the ribosomal stalk which helps the ribosome interact with GTP-bound translation factors. Is thus essential for accurate translation. This Mycoplasma capricolum subsp. capricolum (strain California kid / ATCC 27343 / NCTC 10154) protein is Large ribosomal subunit protein bL12.